The sequence spans 319 residues: MGRKCRKLLLKGIPICGVILLILWGYSLYNTLRFMVPGKATEPFTLSLSDVSDDTSAPGEMEKIPRVIHQLWKDENIPERWSNTVNSCRRQHPDENGWQFILWTDEKIMSFMNENYSWFMPVFHSYPYNIQKFDAARYFILYHYGGVYMDLDIGCKKPMDPLLSKATFILPSTEPIGYSNDWFAATPKHPFLYQAIHNLSKFNHRYFTKYPTVFLSAGPLFLSYQFCKYLLTPHEPVRVLPALLYGNGPNSFFSHVTGDSWHGTDAKVFIWIDRNSKSVLFFAFLAAFAILFLCLRVVFKRRRKRGIAASHSQIQELYP.

Residues 8–28 traverse the membrane as a helical segment; that stretch reads LLLKGIPICGVILLILWGYSL. 2 N-linked (GlcNAc...) asparagine glycosylation sites follow: N115 and N198. 2 helical membrane passes run 211–231 and 279–299; these read PTVF…KYLL and VLFF…RVVF.

It belongs to the glycosyltransferase 32 family.

It localises to the golgi apparatus. The protein resides in the cis-Golgi network membrane. It is found in the trans-Golgi network membrane. With imt2 and imt3, is required for the synthesis of mannosyl phosphorylinositol ceramide (MIPC). Catalyzes the addition of mannosyl to phosphorylinositol ceramide (IPC). MIPC is essential for cell morphology, cell-surface distribution of ergosterol, localization for plasma-membrane transporters, and lipid-raft-mediated endocytosis of plasma membrane proteins to the vacuole. The protein is Inositol phosphoceramide mannosyltransferase 1 (imt1) of Schizosaccharomyces pombe (strain 972 / ATCC 24843) (Fission yeast).